Consider the following 2286-residue polypeptide: DNA polymerase epsilon catalytic subunit A (2286 aa).

Residues 1–30 are disordered; it reads MSLRSGGRRRADPGADGEASRDDGATSSVS. Residues 9 to 24 are compositionally biased toward basic and acidic residues; the sequence is RRADPGADGEASRDDG. A phosphoserine mark is found at Ser1184, Ser1297, Ser1317, and Ser1940. The disordered stretch occupies residues 1939–1969; sequence DSQKAGGAEDEQENEDDEEERDGEEEEEAEE. Acidic residues predominate over residues 1946–1969; it reads AEDEQENEDDEEERDGEEEEEAEE. Residues Cys2158, Cys2161, Cys2187, and Cys2190 each contribute to the Zn(2+) site. Residues 2158 to 2190 form a CysA-type zinc finger; sequence CRSCNFCRDLDLCKDSSFSEDGAVLPQWLCSNC. Positions 2221, 2224, 2236, and 2238 each coordinate [4Fe-4S] cluster. The CysB motif motif lies at 2221–2238; it reads CLKCRGVKETSMPVYCSC.

The protein belongs to the DNA polymerase type-B family. As to quaternary structure, component of the DNA polymerase epsilon complex consisting of four subunits: the catalytic subunit POLE and the accessory subunits POLE2, POLE3 and POLE4. Interacts with RAD17 and TOPBP1.

It localises to the nucleus. The enzyme catalyses DNA(n) + a 2'-deoxyribonucleoside 5'-triphosphate = DNA(n+1) + diphosphate. In terms of biological role, catalytic component of the DNA polymerase epsilon complex. Participates in chromosomal DNA replication. Required during synthesis of the leading DNA strands at the replication fork, binds at/or near replication origins and moves along DNA with the replication fork. Has 3'-5' proofreading exonuclease activity that corrects errors arising during DNA replication. Involved in DNA synthesis during DNA repair. Along with DNA polymerase POLD1 and DNA polymerase POLK, has a role in excision repair (NER) synthesis following UV irradiation. The chain is DNA polymerase epsilon catalytic subunit A from Homo sapiens (Human).